A 148-amino-acid chain; its full sequence is Large ribosomal subunit protein uL15 (148 aa).

Residues 1–57 are disordered; the sequence is MRLHDLYPFPEERKTRKRVGRGSGSGLGCTSGKGNKGQNARAGGGVRPGFEGGQMPL. Gly residues-rich tracts occupy residues 21 to 35 and 42 to 52; these read RGSG…GKGN and AGGGVRPGFEG.

Belongs to the universal ribosomal protein uL15 family. In terms of assembly, part of the 50S ribosomal subunit.

Functionally, binds to the 23S rRNA. In Nitratidesulfovibrio vulgaris (strain ATCC 29579 / DSM 644 / CCUG 34227 / NCIMB 8303 / VKM B-1760 / Hildenborough) (Desulfovibrio vulgaris), this protein is Large ribosomal subunit protein uL15.